Here is a 537-residue protein sequence, read N- to C-terminus: Tegument protein BRRF2 (537 aa).

2 disordered regions span residues 325–474 (LALP…EAQD) and 486–537 (GLRV…LSVI). Residues 334–347 (KPQQTCSQLTSRGN) are compositionally biased toward polar residues. The segment covering 423-441 (SSQAAPSSSSVAPVASLSG) has biased composition (low complexity). Positions 492-517 (DEDEDGSEDGEFSDLDLSDSDHEGDE) are enriched in acidic residues.

This sequence belongs to the lymphocryptovirus BRRF2 family.

The protein localises to the virion tegument. This chain is Tegument protein BRRF2, found in Homo sapiens (Human).